A 347-amino-acid polypeptide reads, in one-letter code: MTGIWDVRITDTSLRDGSHHKRHQFIKEEVGAIVAALDAAGVPVIEVTHGDGLGGSSFNYGFSKTSEQELIKLAAQTAKEAKIAFLMLPGVGTKEDIKEAQDNGGSICRIATHCTEADVSIQHLGLARELGLETVGFLMMAHTIAPEKLAAQARIMADAGCQCVYVVDSAGALVLDGVADRVAALVAELGEDAQVGFHGHENLGLGVANSVEAVRAGAKQIDGSVRRFGAGAGNAPVEALIGVFDKIGVKTGIDFFDIADAAEDVVRPAMPAECLLDRNALIMGYSGVYSSFLKHAVRQSERYGVPAHQLLHRAGQRKLIGGQEDQLIDIALEIKREQESGQVASRR.

In terms of domain architecture, Pyruvate carboxyltransferase spans 7 to 259 (VRITDTSLRD…KTGIDFFDIA (253 aa)). Residue 15-16 (RD) coordinates substrate. Position 16 (Asp-16) interacts with Mn(2+). The Proton acceptor role is filled by His-19. 2 residues coordinate substrate: Ser-169 and His-198. His-198 and His-200 together coordinate Mn(2+). Substrate is bound at residue Tyr-289.

Belongs to the 4-hydroxy-2-oxovalerate aldolase family.

It catalyses the reaction (S)-4-hydroxy-2-oxopentanoate = acetaldehyde + pyruvate. The protein is 4-hydroxy-2-oxovalerate aldolase 2 of Mycobacterium ulcerans (strain Agy99).